The chain runs to 290 residues: Shikimate dehydrogenase (NADP(+)) (290 aa).

Residues 18 to 20 (SYS) and threonine 66 contribute to the shikimate site. The Proton acceptor role is filled by lysine 70. Glutamate 82 serves as a coordination point for NADP(+). The shikimate site is built by asparagine 91 and aspartate 106. Residues 130-134 (GSGGA) and methionine 229 contribute to the NADP(+) site. Shikimate is bound at residue tyrosine 231. Position 252 (glycine 252) interacts with NADP(+).

Belongs to the shikimate dehydrogenase family. In terms of assembly, homodimer.

It carries out the reaction shikimate + NADP(+) = 3-dehydroshikimate + NADPH + H(+). Its pathway is metabolic intermediate biosynthesis; chorismate biosynthesis; chorismate from D-erythrose 4-phosphate and phosphoenolpyruvate: step 4/7. Its function is as follows. Involved in the biosynthesis of the chorismate, which leads to the biosynthesis of aromatic amino acids. Catalyzes the reversible NADPH linked reduction of 3-dehydroshikimate (DHSA) to yield shikimate (SA). This is Shikimate dehydrogenase (NADP(+)) from Chlorobium phaeovibrioides (strain DSM 265 / 1930) (Prosthecochloris vibrioformis (strain DSM 265)).